The chain runs to 1001 residues: Translation initiation factor IF-2 (1001 aa).

Residues 56 to 418 (PDYVHDPNAV…VEAGPPPISR (363 aa)) form a disordered region. The span at 70 to 84 (TEAHEERHEHEEAHE) shows a compositional bias: basic and acidic residues. Low complexity predominate over residues 85–108 (PAAAPKAAVEPETPVAPAPEAAPA). The span at 109–120 (AKEERPAPEEPA) shows a compositional bias: basic and acidic residues. Composition is skewed to pro residues over residues 136-170 (IHPPVGATPPPRPEGPRAAPAPPLPPPAPQVPHAP), 180-194 (PARPEPPAHHPPSQT), 204-217 (RPAPPSAKPLPTTT), 229-252 (QPFPSSPAPGAPQRPQAIPRPPQQ), 305-322 (PAAPRPGVPKAPSAPVPG), and 345-357 (GMPPSRPGGPRPQ). Residues 379 to 410 (SRGRPGDRRPVRQQRERTEEEKILRPQRRHVE) show a composition bias toward basic and acidic residues. A tr-type G domain is found at 499–668 (RRAPVVTIMG…LLVADMQDLK (170 aa)). Residues 508–515 (GHVDHGKT) form a G1 region. 508-515 (GHVDHGKT) is a binding site for GTP. Positions 533–537 (GITQH) are G2. The segment at 554–557 (DTPG) is G3. Residues 554-558 (DTPGH) and 608-611 (NKID) contribute to the GTP site. Positions 608–611 (NKID) are G4. The interval 644-646 (SAR) is G5.

This sequence belongs to the TRAFAC class translation factor GTPase superfamily. Classic translation factor GTPase family. IF-2 subfamily.

It is found in the cytoplasm. In terms of biological role, one of the essential components for the initiation of protein synthesis. Protects formylmethionyl-tRNA from spontaneous hydrolysis and promotes its binding to the 30S ribosomal subunits. Also involved in the hydrolysis of GTP during the formation of the 70S ribosomal complex. The sequence is that of Translation initiation factor IF-2 from Solibacter usitatus (strain Ellin6076).